Consider the following 1410-residue polypeptide: Endoribonuclease Dicer homolog 2a (1410 aa).

A compositionally biased stretch (gly residues) spans 1–15 (MGGPLTAAGGRGDGG). Residues 1–30 (MGGPLTAAGGRGDGGAKAVEPLRPPPPPDP) are disordered. Residues 41–222 (ALERAVRGNT…HNYSKQISEI (182 aa)) form the Helicase ATP-binding domain. ATP is bound at residue 54-61 (LETGSGKT). The DECH box motif lies at 163 to 166 (DECH). The Helicase C-terminal domain occupies 388–561 (TLLQYRHMQD…DTYYRVESTR (174 aa)). A Dicer dsRNA-binding fold domain is found at 569–655 (SVPLIHFFCS…LPELDVPCDE (87 aa)). The PAZ domain maps to 827 to 942 (KDIDLLQTKD…LPPELCRIIM (116 aa)). RNase III domains follow at residues 969–1124 (SVKL…STAG) and 1161–1308 (VRSL…LDSK). Mg(2+) is bound by residues glutamate 1200, aspartate 1294, and glutamate 1297. Residues 1334–1400 (DPVKGLQEFC…SKAVLKDLIA (67 aa)) enclose the DRBM domain.

The protein belongs to the helicase family. Dicer subfamily. May interact with ARGONAUTE1 or PINHEAD through their common PAZ domains. It depends on Mg(2+) as a cofactor. Mn(2+) serves as cofactor.

It localises to the nucleus. Functionally, probably involved in the RNA silencing pathway. May cleave double-stranded RNA to produce short 21-24 nucleotides (nt) RNAs which target the selective destruction of complementary RNAs. The protein is Endoribonuclease Dicer homolog 2a (DCL2A) of Oryza sativa subsp. japonica (Rice).